Here is a 403-residue protein sequence, read N- to C-terminus: Tyrosine--tRNA ligase (403 aa).

Positions proline 42–histidine 51 match the 'HIGH' region motif. Residues lysine 226–serine 230 carry the 'KMSKS' region motif. Residue lysine 229 coordinates ATP. The S4 RNA-binding domain maps to methionine 336 to leucine 396.

It belongs to the class-I aminoacyl-tRNA synthetase family. TyrS type 2 subfamily. Homodimer.

Its subcellular location is the cytoplasm. The enzyme catalyses tRNA(Tyr) + L-tyrosine + ATP = L-tyrosyl-tRNA(Tyr) + AMP + diphosphate + H(+). In terms of biological role, catalyzes the attachment of tyrosine to tRNA(Tyr) in a two-step reaction: tyrosine is first activated by ATP to form Tyr-AMP and then transferred to the acceptor end of tRNA(Tyr). The polypeptide is Tyrosine--tRNA ligase (Pseudomonas syringae pv. syringae (strain B728a)).